The following is a 340-amino-acid chain: Glycerol-3-phosphate dehydrogenase [NAD(P)+] (340 aa).

The NADPH site is built by Ser-11, Trp-12, Arg-33, and Lys-106. Sn-glycerol 3-phosphate-binding residues include Lys-106, Gly-137, and Ser-139. Ala-141 provides a ligand contact to NADPH. The sn-glycerol 3-phosphate site is built by Lys-192, Asp-245, Ser-255, Arg-256, and Asn-257. Catalysis depends on Lys-192, which acts as the Proton acceptor. An NADPH-binding site is contributed by Arg-256. Val-280 and Glu-282 together coordinate NADPH.

This sequence belongs to the NAD-dependent glycerol-3-phosphate dehydrogenase family.

It is found in the cytoplasm. The catalysed reaction is sn-glycerol 3-phosphate + NAD(+) = dihydroxyacetone phosphate + NADH + H(+). The enzyme catalyses sn-glycerol 3-phosphate + NADP(+) = dihydroxyacetone phosphate + NADPH + H(+). The protein operates within membrane lipid metabolism; glycerophospholipid metabolism. Catalyzes the reduction of the glycolytic intermediate dihydroxyacetone phosphate (DHAP) to sn-glycerol 3-phosphate (G3P), the key precursor for phospholipid synthesis. The polypeptide is Glycerol-3-phosphate dehydrogenase [NAD(P)+] (Bacillus cereus (strain B4264)).